Reading from the N-terminus, the 284-residue chain is MAITYLLPLFLSLIITSSVSANFQRDVEITWGDGRGQIKNNGELLTLSLDKSSGSGFQSKNEYLFGKVSMQMKLVPGNSAGTVTTLYLKSPGTTWDEIDFEFLGNSSGEPYTLHTNVYTQGKGDKEQQFKLWFDPTANFHTYTILWNPQRIIFTVDGTPIREFKNMESLGTLFPKNKPMRMYSSLWNADDWATRGGLVKTDWSKAPFTASYRGFQQEACVWSNGKSSCPNASKQGTTTGSWLSQELDSTAQQRMRWVQRNYMIYNYCTDAKRFPQGLPKECLAA.

Residues 1 to 21 (MAITYLLPLFLSLIITSSVSA) form the signal peptide. The GH16 domain maps to 22 to 211 (NFQRDVEITW…WSKAPFTASY (190 aa)). Catalysis depends on Glu97, which acts as the Nucleophile. Catalysis depends on Glu101, which acts as the Proton donor. Glu101 is a binding site for xyloglucan. A glycan (N-linked (GlcNAc...) asparagine) is linked at Asn105. Residues 114-116 (HTN), 124-126 (DKE), 190-191 (DW), and Gly195 each bind xyloglucan. Cys219 and Cys228 form a disulfide bridge. An N-linked (GlcNAc...) asparagine glycan is attached at Asn230. Cys267 and Cys281 form a disulfide bridge. Arg272 lines the xyloglucan pocket.

The protein belongs to the glycosyl hydrolase 16 family. XTH group 2 subfamily. Contains at least one intrachain disulfide bond essential for its enzymatic activity. Post-translationally, N-glycosylated; essential for its enzymatic activity. In terms of tissue distribution, highly expressed. Predominantly expressed in green siliques. Expressed in young expanding leaves, trichomes, lateral root primordia, vascular tissue, abscission zones and elongating hypocols. Following wind stimulation, it decreases in the leaves of wind-stimulated plants, while it strongly increases in sites around cells of the pith parenchyma, between the vascular elements, and within the epidermis.

The protein localises to the secreted. Its subcellular location is the cell wall. The protein resides in the extracellular space. It localises to the apoplast. The enzyme catalyses breaks a beta-(1-&gt;4) bond in the backbone of a xyloglucan and transfers the xyloglucanyl segment on to O-4 of the non-reducing terminal glucose residue of an acceptor, which can be a xyloglucan or an oligosaccharide of xyloglucan.. Functionally, catalyzes xyloglucan endohydrolysis (XEH) and/or endotransglycosylation (XET). Cleaves and religates xyloglucan polymers, an essential constituent of the primary cell wall, and thereby participates in cell wall construction of growing tissues. Its induction in case of mechanical stress, suggests that it may contribute in the adaptive changes in morphogenesis by being recruited to alter tissues tensil strength, or flexibility, enabling adaptation to mechanically stressful environments. The chain is Xyloglucan endotransglucosylase/hydrolase protein 22 (XTH22) from Arabidopsis thaliana (Mouse-ear cress).